Reading from the N-terminus, the 231-residue chain is Large ribosomal subunit protein uL1 (231 aa).

The protein belongs to the universal ribosomal protein uL1 family. Part of the 50S ribosomal subunit.

Functionally, binds directly to 23S rRNA. The L1 stalk is quite mobile in the ribosome, and is involved in E site tRNA release. Protein L1 is also a translational repressor protein, it controls the translation of the L11 operon by binding to its mRNA. The sequence is that of Large ribosomal subunit protein uL1 from Pseudomonas fluorescens (strain Pf0-1).